The chain runs to 130 residues: Albumin-1 A (130 aa).

The signal sequence occupies residues 1–26 (MASVKLASLIVLFATLGMFLTKNVGA). Cystine bridges form between Cys29-Cys46, Cys33-Cys48, and Cys41-Cys58. Propeptides lie at residues 64–69 (VFLRTN) and 123–130 (LLKSVSTA).

Post-translationally, the C-terminal glycine may be removed from PA1b. Major component of both the cotyledons and embryonic axes of mature seeds.

Functionally, PA1b binds to basic 7S globulin (BG) and stimulates its phosphorylation activity. Involved in the signal transduction system to regulate the growth and differentiation as a hormone peptide. Toxic to various insects through binding to a high affinity binding site in the insect gut. This chain is Albumin-1 A, found in Pisum sativum (Garden pea).